We begin with the raw amino-acid sequence, 456 residues long: High mobility group B protein 6 (456 aa).

4 disordered regions span residues 1–42 (MATN…KSAK), 117–142 (SSLT…KRPS), 238–258 (AEQD…PKHP), and 349–389 (MLKK…YFLF). The span at 11–21 (KKPRNSRKALK) shows a compositional bias: basic residues. The segment at residues 138 to 206 (TKRPSSSYVL…AYLQVIAKEK (69 aa)) is a DNA-binding region (HMG box 1). Residues 240 to 254 (QDNKKKNKKEKDPLK) are compositionally biased toward basic and acidic residues. The segment at residues 255–321 (PKHPVSAFLV…TYLQAMEEYK (67 aa)) is a DNA-binding region (HMG box 2). Basic and acidic residues predominate over residues 354 to 363 (EKTDNLIKKE). A DNA-binding region (HMG box 3) is located at residues 379 to 447 (PKKPASSYFL…AYKKEVEAYN (69 aa)).

The protein resides in the nucleus. In Arabidopsis thaliana (Mouse-ear cress), this protein is High mobility group B protein 6 (HMGB6).